Here is a 1153-residue protein sequence, read N- to C-terminus: Otoancorin (1153 aa).

Positions 1–22 are cleaved as a signal peptide; sequence MSQEPTTYSLFLFLFLSHGVSS. N-linked (GlcNAc...) asparagine glycosylation occurs at asparagine 156. An N-linked (GlcNAc...) (complex) asparagine glycan is attached at asparagine 211. Residues asparagine 244, asparagine 289, asparagine 321, asparagine 394, asparagine 398, asparagine 460, asparagine 544, asparagine 812, asparagine 911, and asparagine 974 are each glycosylated (N-linked (GlcNAc...) asparagine). Residues 1109–1128 form a disordered region; it reads HSWQDAPASAGPTRTSSSRS. Alanine 1130 carries the GPI-anchor amidated alanine lipid modification. The propeptide at 1131–1153 is removed in mature form; sequence GALQSWGLWLGCPLLVLMAKLLW.

The protein belongs to the stereocilin family.

It localises to the apical cell membrane. The protein localises to the secreted. It is found in the extracellular space. Its subcellular location is the extracellular matrix. Its function is as follows. May act as an adhesion molecule. The sequence is that of Otoancorin (OTOA) from Homo sapiens (Human).